Reading from the N-terminus, the 231-residue chain is 2-C-methyl-D-erythritol 4-phosphate cytidylyltransferase (231 aa).

This sequence belongs to the IspD/TarI cytidylyltransferase family. IspD subfamily.

The catalysed reaction is 2-C-methyl-D-erythritol 4-phosphate + CTP + H(+) = 4-CDP-2-C-methyl-D-erythritol + diphosphate. Its pathway is isoprenoid biosynthesis; isopentenyl diphosphate biosynthesis via DXP pathway; isopentenyl diphosphate from 1-deoxy-D-xylulose 5-phosphate: step 2/6. Catalyzes the formation of 4-diphosphocytidyl-2-C-methyl-D-erythritol from CTP and 2-C-methyl-D-erythritol 4-phosphate (MEP). This Xylella fastidiosa (strain 9a5c) protein is 2-C-methyl-D-erythritol 4-phosphate cytidylyltransferase.